A 152-amino-acid chain; its full sequence is Large ribosomal subunit protein bL9 (152 aa).

The protein belongs to the bacterial ribosomal protein bL9 family.

Functionally, binds to the 23S rRNA. The chain is Large ribosomal subunit protein bL9 from Gloeothece citriformis (strain PCC 7424) (Cyanothece sp. (strain PCC 7424)).